Here is a 267-residue protein sequence, read N- to C-terminus: Ribosomal RNA large subunit methyltransferase E (267 aa).

Glycine 52, phenylalanine 54, aspartate 72, aspartate 90, and aspartate 114 together coordinate S-adenosyl-L-methionine. The active-site Proton acceptor is lysine 154. Positions 212-252 are enriched in low complexity; the sequence is EAPRAPAPPEQAAAPEEATAPATRAARQKPAPAKKPAAAKR. The interval 212-267 is disordered; it reads EAPRAPAPPEQAAAPEEATAPATRAARQKPAPAKKPAAAKRPAARKRAAKKPARRA. Positions 253 to 267 are enriched in basic residues; it reads PAARKRAAKKPARRA.

It belongs to the class I-like SAM-binding methyltransferase superfamily. RNA methyltransferase RlmE family.

The protein resides in the cytoplasm. The enzyme catalyses uridine(2552) in 23S rRNA + S-adenosyl-L-methionine = 2'-O-methyluridine(2552) in 23S rRNA + S-adenosyl-L-homocysteine + H(+). Functionally, specifically methylates the uridine in position 2552 of 23S rRNA at the 2'-O position of the ribose in the fully assembled 50S ribosomal subunit. In Anaeromyxobacter dehalogenans (strain 2CP-C), this protein is Ribosomal RNA large subunit methyltransferase E.